Here is a 360-residue protein sequence, read N- to C-terminus: DNA replication and repair protein RecF (360 aa).

30–37 provides a ligand contact to ATP; that stretch reads GQNGSGKT.

It belongs to the RecF family.

It is found in the cytoplasm. The RecF protein is involved in DNA metabolism; it is required for DNA replication and normal SOS inducibility. RecF binds preferentially to single-stranded, linear DNA. It also seems to bind ATP. In Shewanella oneidensis (strain ATCC 700550 / JCM 31522 / CIP 106686 / LMG 19005 / NCIMB 14063 / MR-1), this protein is DNA replication and repair protein RecF.